A 406-amino-acid chain; its full sequence is Tryptophan 2,3-dioxygenase (406 aa).

Ser19 carries the phosphoserine modification. Residues 72–76 (FIITH) and Arg144 contribute to the substrate site. His328 is a binding site for heme. A substrate-binding site is contributed by Thr342.

Belongs to the tryptophan 2,3-dioxygenase family. Homotetramer. Dimer of dimers. Requires heme as cofactor. In terms of tissue distribution, liver.

The enzyme catalyses L-tryptophan + O2 = N-formyl-L-kynurenine. It participates in amino-acid degradation; L-tryptophan degradation via kynurenine pathway; L-kynurenine from L-tryptophan: step 1/2. Heme-dependent dioxygenase that catalyzes the oxidative cleavage of the L-tryptophan (L-Trp) pyrrole ring and converts L-tryptophan to N-formyl-L-kynurenine. Catalyzes the oxidative cleavage of the indole moiety. This chain is Tryptophan 2,3-dioxygenase, found in Rattus norvegicus (Rat).